A 220-amino-acid polypeptide reads, in one-letter code: Type II restriction enzyme NspV (220 aa).

The catalysed reaction is Endonucleolytic cleavage of DNA to give specific double-stranded fragments with terminal 5'-phosphates.. A P subtype restriction enzyme that recognizes the double-stranded sequence 5'-TTCGAA-3' and cleaves after T-2. The sequence is that of Type II restriction enzyme NspV from Nostoc sp. (strain ATCC 29411 / PCC 7524).